A 366-amino-acid chain; its full sequence is Anhydro-N-acetylmuramic acid kinase (366 aa).

Position 10 to 17 (10 to 17 (GTSMDGID)) interacts with ATP.

This sequence belongs to the anhydro-N-acetylmuramic acid kinase family.

It catalyses the reaction 1,6-anhydro-N-acetyl-beta-muramate + ATP + H2O = N-acetyl-D-muramate 6-phosphate + ADP + H(+). Its pathway is amino-sugar metabolism; 1,6-anhydro-N-acetylmuramate degradation. The protein operates within cell wall biogenesis; peptidoglycan recycling. Functionally, catalyzes the specific phosphorylation of 1,6-anhydro-N-acetylmuramic acid (anhMurNAc) with the simultaneous cleavage of the 1,6-anhydro ring, generating MurNAc-6-P. Is required for the utilization of anhMurNAc either imported from the medium or derived from its own cell wall murein, and thus plays a role in cell wall recycling. This is Anhydro-N-acetylmuramic acid kinase from Legionella pneumophila (strain Paris).